We begin with the raw amino-acid sequence, 98 residues long: NADH-ubiquinone oxidoreductase chain 4L (98 aa).

Transmembrane regions (helical) follow at residues 1-21 (MPSI…GVLI), 26-46 (LMSS…LVSL), and 61-81 (IILL…LVMV).

It belongs to the complex I subunit 4L family. As to quaternary structure, core subunit of respiratory chain NADH dehydrogenase (Complex I) which is composed of 45 different subunits.

It localises to the mitochondrion inner membrane. The catalysed reaction is a ubiquinone + NADH + 5 H(+)(in) = a ubiquinol + NAD(+) + 4 H(+)(out). Core subunit of the mitochondrial membrane respiratory chain NADH dehydrogenase (Complex I) which catalyzes electron transfer from NADH through the respiratory chain, using ubiquinone as an electron acceptor. Part of the enzyme membrane arm which is embedded in the lipid bilayer and involved in proton translocation. This is NADH-ubiquinone oxidoreductase chain 4L (MT-ND4L) from Galago senegalensis (Northern lesser bushbaby).